The chain runs to 355 residues: Methionine import ATP-binding protein MetN (355 aa).

In terms of domain architecture, ABC transporter spans 8-250 (LKNIDITFTQ…PQEDLTQEFI (243 aa)). 42–49 (GYSGAGKS) serves as a coordination point for ATP.

This sequence belongs to the ABC transporter superfamily. Methionine importer (TC 3.A.1.24) family. As to quaternary structure, the complex is composed of two ATP-binding proteins (MetN), two transmembrane proteins (MetI) and a solute-binding protein (MetQ).

It localises to the cell membrane. The catalysed reaction is L-methionine(out) + ATP + H2O = L-methionine(in) + ADP + phosphate + H(+). The enzyme catalyses D-methionine(out) + ATP + H2O = D-methionine(in) + ADP + phosphate + H(+). In terms of biological role, part of the ABC transporter complex MetNIQ involved in methionine import. Responsible for energy coupling to the transport system. The protein is Methionine import ATP-binding protein MetN of Streptococcus thermophilus (strain CNRZ 1066).